The chain runs to 478 residues: Patatin-like phospholipase domain-containing protein 2 (478 aa).

Topologically, residues 1-8 (MFPRETKW) are cytoplasmic. Residues 9–29 (NISFAGCGFLGVYHIGVASCL) form a helical membrane-spanning segment. The PNPLA domain occupies 10–179 (ISFAGCGFLG…SDNLPLYELK (170 aa)). The GXGXXG signature appears at 14-19 (GCGFLG). Over 30-42 (REHAPFLVANATH) the chain is Extracellular. An N-linked (GlcNAc...) asparagine glycan is attached at Asn39. Residues 43 to 63 (IYGASAGALTATALVTGACLG) traverse the membrane as a helical segment. Residues 45–49 (GASAG) carry the GXSXG motif. Ser47 serves as the catalytic Nucleophile. At 64-137 (EAGANIIEVS…IISHFSSKDE (74 aa)) the chain is on the cytoplasmic side. Residue Lys92 forms a Glycyl lysine isopeptide (Lys-Gly) (interchain with G-Cter in ubiquitin) linkage. The helical transmembrane segment at 138 to 158 (LIQANVCSTFIPVYCGLIPPT) threads the bilayer. The Extracellular segment spans residues 159-323 (LQGVRYVDGG…TTLSNMLPVR (165 aa)). The active-site Proton acceptor is Asp166. A DGA/G motif is present at residues 166–168 (DGG). Residues 324–344 (LATAMMVPYTLPLESAVSFTI) form a helical membrane-spanning segment. The Cytoplasmic segment spans residues 345 to 478 (RLLEWLPDVP…PQDPSGLPPC (134 aa)). Residue Ser366 is modified to Phosphoserine; in vitro. A Phosphoserine; by PKA modification is found at Ser388. Residues Ser398 and Ser422 each carry the phosphoserine modification. Residues 456 to 478 (RAPASPTATDPATPQDPSGLPPC) form a disordered region. Residues 457 to 478 (APASPTATDPATPQDPSGLPPC) are compositionally biased toward low complexity. Position 460 is a phosphoserine; in vitro (Ser460).

In terms of assembly, interacts with ABHD5; this association stimulates PNPLA2 triglyceride hydrolase activity. Interacts with SERPINF1; this interaction stimulates the phospholipase A2 activity of PNPLA2. Despite a colocalization in lipid droplets, it probably does not interact with PLIN. Interacts with PLIN5; prevents interaction with ABHD5. Interacts with FAF2. Phosphorylation at Ser-398 by PKA is increased during fasting and moderate intensity exercise, and moderately increases lipolytic activity. Post-translationally, ubiquitinated by PEX2 in response to reactive oxygen species (ROS), leading to its degradation. Ubiquitination is stimulated by LDAH.

The protein resides in the lipid droplet. Its subcellular location is the cell membrane. It localises to the cytoplasm. It catalyses the reaction a triacylglycerol + H2O = a diacylglycerol + a fatty acid + H(+). The catalysed reaction is a triacylglycerol + H2O = a 1,2-diacylglycerol + a fatty acid + H(+). The enzyme catalyses a triacylglycerol + H2O = a 1,3-diacylglycerol + a fatty acid + H(+). It carries out the reaction a triacyl-sn-glycerol + H2O = a 1,3-diacyl-sn-glycerol + a fatty acid + H(+). It catalyses the reaction a triacyl-sn-glycerol + H2O = a 2,3-diacyl-sn-glycerol + a fatty acid + H(+). The catalysed reaction is a 1-acylglycerol + a 1,3-diacylglycerol = a triacylglycerol + glycerol. The enzyme catalyses a 1-acylglycerol + a 1,2-diacylglycerol = a triacylglycerol + glycerol. It carries out the reaction 2 a 1-acylglycerol = a 1,2-diacylglycerol + glycerol. It catalyses the reaction a triacylglycerol + all-trans-retinol = an all-trans-retinyl ester + a diacylglycerol. The catalysed reaction is 1,2-di-(9Z-octadecenoyl)-glycerol + (9Z)-octadecenoate + H(+) = 1,2,3-tri-(9Z-octadecenoyl)-glycerol + H2O. The enzyme catalyses 1,2,3-tri-(9Z-octadecenoyl)-glycerol + H2O = 1,3-di-(9Z-octadecenoyl)-glycerol + (9Z)-octadecenoate + H(+). It carries out the reaction 1-(9Z-octadecenoyl)-glycerol + 1,3-di-(9Z-octadecenoyl)-glycerol = 1,2,3-tri-(9Z-octadecenoyl)-glycerol + glycerol. It catalyses the reaction 1-(9Z-octadecenoyl)-glycerol + 1,2-di-(9Z-octadecenoyl)-glycerol = 1,2,3-tri-(9Z-octadecenoyl)-glycerol + glycerol. The catalysed reaction is 2 1-(9Z-octadecenoyl)-glycerol = 1,2-di-(9Z-octadecenoyl)-glycerol + glycerol. The enzyme catalyses 1,2,3-tri-(9Z-octadecenoyl)-glycerol + all-trans-retinol = all-trans-retinyl 9Z-octadecenoate + di-(9Z)-octadecenoylglycerol. It carries out the reaction 1,2,3-tri-(9Z)-hexadecenoylglycerol + H2O = 1,3-di-(9Z)-hexadecenoylglycerol + (9Z)-hexadecenoate + H(+). It catalyses the reaction 1,2,3-tri-(9Z,12Z)-octadecadienoylglycerol + H2O = 1,3-di-(9Z,12Z)-octadecadienoylglycerol + (9Z,12Z)-octadecadienoate + H(+). The catalysed reaction is 1,2,3-tri-(9Z,12Z,15Z)-octadecatrienoylglycerol + H2O = 1,3-di-(9Z,12Z,15Z)-octadecatrienoylglycerol + (9Z,12Z,15Z)-octadecatrienoate + H(+). The enzyme catalyses 1,3-di-(9Z)-octadecenoyl-2-hexadecanoylglycerol + H2O = 1,3-di-(9Z-octadecenoyl)-glycerol + hexadecanoate + H(+). It carries out the reaction 1,2-di-(9Z)-octadecenoyl-3-hexadecanoyl-sn-glycerol + H2O = 1-(9Z)-octadecenoyl-3-hexadecanoyl-sn-glycerol + (9Z)-octadecenoate + H(+). It catalyses the reaction 1-hexadecanoyl-2,3-di-(9Z)-octadecenoyl-sn-glycerol + H2O = 1-hexadecanoyl-3-(9Z)-octadecenoyl-sn-glycerol + (9Z)-octadecenoate + H(+). The catalysed reaction is 1,2,3-tri-(9Z-octadecenoyl)-glycerol + H2O = 2,3-di-(9Z)-octadecenoyl-sn-glycerol + (9Z)-octadecenoate + H(+). The enzyme catalyses 1,2,3-tri-(9Z)-hexadecenoylglycerol + H2O = 2,3-di-(9Z)-hexadecenoyl-sn-glycerol + (9Z)-hexadecenoate + H(+). It carries out the reaction 1,2,3-tri-(9Z,12Z)-octadecadienoylglycerol + H2O = 2,3-di-(9Z,12Z)-octadecadienoyl-sn-glycerol + (9Z,12Z)-octadecadienoate + H(+). It catalyses the reaction 1,2,3-tri-(9Z,12Z,15Z)-octadecatrienoylglycerol + H2O = 2,3-di-(9Z,12Z,15Z)-octadecatrienoyl-sn-glycerol + (9Z,12Z,15Z)-octadecatrienoate + H(+). The catalysed reaction is 1,3-di-(9Z)-octadecenoyl-2-hexadecanoylglycerol + H2O = 2-hexadecanoyl-3-(9Z)-octadecenoyl-sn-glycerol + (9Z)-octadecenoate + H(+). The enzyme catalyses 1-hexadecanoyl-2,3-di-(9Z)-octadecenoyl-sn-glycerol + H2O = 2,3-di-(9Z)-octadecenoyl-sn-glycerol + hexadecanoate + H(+). It carries out the reaction 1,2-di-(9Z)-octadecenoyl-3-hexadecanoyl-sn-glycerol + H2O = 2-(9Z-octadecenoyl)-3-hexadecanoyl-sn-glycerol + (9Z)-octadecenoate + H(+). It catalyses the reaction a 1,2-diacyl-sn-glycero-3-phosphocholine + H2O = a 1-acyl-sn-glycero-3-phosphocholine + a fatty acid + H(+). The catalysed reaction is 1,2,3-tri-(9Z-octadecenoyl)-glycerol + 9-hydroxy-octadecanoate = 9-(9Z-octadecenoyloxy)-octadecanoate + 2,3-di-(9Z)-octadecenoyl-sn-glycerol. The enzyme catalyses 1-hexadecanoyl-2,3-di-(9Z)-octadecenoyl-sn-glycerol + 9-hydroxy-octadecanoate = 9-hexadecanoyloxy-octadecanoate + 2,3-di-(9Z)-octadecenoyl-sn-glycerol. It carries out the reaction 1,2,3-tri-(10Z)-heptadecenoylglycerol + 9-hydroxy-octadecanoate = 2,3-di-(10Z-heptadecenoyl)-sn-glycerol + 9-(10Z-heptadecenoyloxy)-octadecanoate. It catalyses the reaction 1,2,3-tri-(9Z,12Z)-octadecadienoylglycerol + 9-hydroxy-octadecanoate = 2,3-di-(9Z,12Z)-octadecadienoyl-sn-glycerol + 9-(9Z,12Z-octadecadienoyloxy)-octadecanoate. The catalysed reaction is 1,2,3-tri-(9Z)-hexadecenoylglycerol + 9-hydroxy-octadecanoate = 2,3-di-(9Z)-hexadecenoyl-sn-glycerol + 9-(9Z-hexadecenoyloxy)-octadecanoate. The enzyme catalyses 9-hydroxy-octadecanoate + 1,2-di-(9Z-octadecenoyl)-sn-glycerol = 9-(9Z-octadecenoyloxy)-octadecanoate + 2-(9Z-octadecenoyl)-glycerol. It carries out the reaction 1-hexadecanoyl-2,3-di-(9Z)-octadecenoyl-sn-glycerol + 9-hydroxy-octadecanoate = 1-hexadecanoyl-3-(9Z)-octadecenoyl-sn-glycerol + 9-(9Z-octadecenoyloxy)-octadecanoate. It functions in the pathway glycerolipid metabolism; triacylglycerol degradation. Functionally, catalyzes the initial step in triglyceride hydrolysis in adipocyte and non-adipocyte lipid droplets. Exhibits a strong preference for the hydrolysis of long-chain fatty acid esters at the sn-2 position of the glycerol backbone and acts coordinately with LIPE/HLS and DGAT2 within the lipolytic cascade. Also possesses acylglycerol transacylase and phospholipase A2 activities. Transfers fatty acid from triglyceride to retinol, hydrolyzes retinylesters, and generates 1,3-diacylglycerol from triglycerides. Regulates adiposome size and may be involved in the degradation of adiposomes. Catalyzes the formation of an ester bond between hydroxy fatty acids and fatty acids derived from triglycerides or diglycerides to generate fatty acid esters of hydroxy fatty acids (FAHFAs) in adipocytes. Acts antagonistically with LDAH in regulation of cellular lipid stores. Inhibits LDAH-stimulated lipid droplet fusion. May play an important role in energy homeostasis. May play a role in the response of the organism to starvation, enhancing hydrolysis of triglycerides and providing free fatty acids to other tissues to be oxidized in situations of energy depletion. This chain is Patatin-like phospholipase domain-containing protein 2, found in Rattus norvegicus (Rat).